A 127-amino-acid polypeptide reads, in one-letter code: Glycine cleavage system H protein (127 aa).

In terms of domain architecture, Lipoyl-binding spans 24-105 (TALVGITDFA…YEDGWMVKVS (82 aa)). At K65 the chain carries N6-lipoyllysine.

This sequence belongs to the GcvH family. The glycine cleavage system is composed of four proteins: P, T, L and H. Requires (R)-lipoate as cofactor.

Functionally, the glycine cleavage system catalyzes the degradation of glycine. The H protein shuttles the methylamine group of glycine from the P protein to the T protein. This is Glycine cleavage system H protein from Prosthecochloris aestuarii (strain DSM 271 / SK 413).